The sequence spans 553 residues: Solute carrier family 45 member 3 (553 aa).

Helical transmembrane passes span 19 to 39, 52 to 72, 88 to 108, 120 to 140, 161 to 181, 198 to 218, 275 to 295, 323 to 343, 353 to 373, 382 to 402, and 522 to 542; these read LLVN…ITYV, FMTM…PLLG, FIWA…RAGW, LELA…QVCF, FSVY…LPAI, CLFG…LFVT, FVAE…YTDF, MGSL…LVMD, SVYL…CLSH, AALT…LASL, and AYMV…TQVV.

It belongs to the glycoside-pentoside-hexuronide (GPH) cation symporter transporter (TC 2.A.2) family. Expressed in the epididymis. Primarily expressed in the prostate, but also in other tissues.

Its subcellular location is the membrane. The catalysed reaction is sucrose(out) + H(+)(out) = sucrose(in) + H(+)(in). Proton-associated sucrose transporter. May be able to transport also glucose and fructose. The protein is Solute carrier family 45 member 3 (Slc45a3) of Mus musculus (Mouse).